The sequence spans 251 residues: tRNA (guanine-N(7)-)-methyltransferase (251 aa).

S-adenosyl-L-methionine is bound by residues glycine 72, 95–96 (EI), 132–133 (NA), and leucine 152. Aspartate 155 is an active-site residue. Residue 230 to 232 (SEE) coordinates S-adenosyl-L-methionine.

It belongs to the class I-like SAM-binding methyltransferase superfamily. TrmB family.

It is found in the nucleus. The enzyme catalyses guanosine(46) in tRNA + S-adenosyl-L-methionine = N(7)-methylguanosine(46) in tRNA + S-adenosyl-L-homocysteine. The protein operates within tRNA modification; N(7)-methylguanine-tRNA biosynthesis. In terms of biological role, catalyzes the formation of N(7)-methylguanine at position 46 (m7G46) in tRNA. The protein is tRNA (guanine-N(7)-)-methyltransferase of Drosophila willistoni (Fruit fly).